Consider the following 154-residue polypeptide: Small ribosomal subunit protein uS7 (154 aa).

It belongs to the universal ribosomal protein uS7 family. In terms of assembly, part of the 30S ribosomal subunit. Contacts proteins S9 and S11.

Its function is as follows. One of the primary rRNA binding proteins, it binds directly to 16S rRNA where it nucleates assembly of the head domain of the 30S subunit. Is located at the subunit interface close to the decoding center, probably blocks exit of the E-site tRNA. This chain is Small ribosomal subunit protein uS7, found in Karelsulcia muelleri (strain GWSS) (Sulcia muelleri).